A 623-amino-acid chain; its full sequence is Leucine aminopeptidase 2 (623 aa).

A peptide-binding positions include 136 to 138 (QCE) and 261 to 266 (PYGGME). Zn(2+) is bound at residue H290. The active-site Proton acceptor is E291. Positions 294 and 313 each coordinate Zn(2+). Catalysis depends on Y391, which acts as the Proton donor.

This sequence belongs to the peptidase M1 family. Requires Zn(2+) as cofactor.

The protein localises to the cytoplasm. It is found in the nucleus. It catalyses the reaction an epoxide + H2O = an ethanediol. Functionally, aminopeptidase that preferentially cleaves di- and tripeptides. Also has low epoxide hydrolase activity (in vitro). Can hydrolyze the epoxide leukotriene LTA(4) but it forms preferentially 5,6-dihydroxy-7,9,11,14-eicosatetraenoic acid rather than the cytokine leukotriene B(4) as the product compared to the homologous mammalian enzyme (in vitro). This chain is Leucine aminopeptidase 2 (LKH1), found in Candida albicans (strain SC5314 / ATCC MYA-2876) (Yeast).